Consider the following 273-residue polypeptide: Phosphate import ATP-binding protein PstB (273 aa).

The ABC transporter domain occupies 27-268; that stretch reads VTVRDLNFYY…PSDRRTQDYI (242 aa). 59 to 66 contacts ATP; the sequence is GPSGCGKS.

Belongs to the ABC transporter superfamily. Phosphate importer (TC 3.A.1.7) family. As to quaternary structure, the complex is composed of two ATP-binding proteins (PstB), two transmembrane proteins (PstC and PstA) and a solute-binding protein (PstS).

The protein localises to the cell inner membrane. It catalyses the reaction phosphate(out) + ATP + H2O = ADP + 2 phosphate(in) + H(+). Its function is as follows. Part of the ABC transporter complex PstSACB involved in phosphate import. Responsible for energy coupling to the transport system. The polypeptide is Phosphate import ATP-binding protein PstB (Rhodopseudomonas palustris (strain ATCC BAA-98 / CGA009)).